A 444-amino-acid chain; its full sequence is Interferon-induced protein 44 (444 aa).

The 152-residue stretch at 1–152 folds into the TLDc domain; that stretch reads MAVTTRLTWL…IQDYEVFRCE (152 aa).

This sequence belongs to the IFI44 family.

Its subcellular location is the cytoplasm. Its function is as follows. This protein aggregates to form microtubular structures. This Homo sapiens (Human) protein is Interferon-induced protein 44 (IFI44).